The primary structure comprises 473 residues: Calcium/calmodulin-dependent protein kinase type IV (473 aa).

2 positions are modified to phosphoserine; by autocatalysis: serine 12 and serine 13. Residues 46 to 300 enclose the Protein kinase domain; that stretch reads FEVESELGRG…TFQALQHPWV (255 aa). Residues 52 to 60 and lysine 75 contribute to the ATP site; that span reads LGRGATSIV. O-linked (GlcNAc) threonine glycosylation occurs at threonine 57. A glycan (O-linked (GlcNAc) serine) is linked at serine 58. Serine 137 carries an O-linked (GlcNAc) serine glycan. The active-site Proton acceptor is aspartate 164. Serine 189 is a glycosylation site (O-linked (GlcNAc) serine). Phosphothreonine; by CaMKK1 and CaMKK2 is present on threonine 200. The segment at 305-321 is autoinhibitory domain; sequence ANFVHMDTAQKKLQEFN. Residues 306 to 323 are PP2A-binding; sequence NFVHMDTAQKKLQEFNAR. The segment at 322–341 is calmodulin-binding; it reads ARRKLKAAVKAVVASSRLGS. Phosphoserine; by autocatalysis is present on serine 336. Serine 341 is modified (phosphoserine). The span at 341–350 shows a compositional bias: low complexity; that stretch reads SASSSHGSIQ. Disordered regions lie at residues 341–368 and 445–473; these read SASS…GNED and EEAA…LPEY. O-linked (GlcNAc) serine glycosylation is found at serine 344, serine 345, and serine 356. A Phosphoserine modification is found at serine 360.

The protein belongs to the protein kinase superfamily. CAMK Ser/Thr protein kinase family. CaMK subfamily. In terms of assembly, monomer. Interacts with protein phosphatase 2A (PPP2CA/PPP2CB); the interaction is mutually exclusive with binding to Ca(2+)/calmodulin. Post-translationally, phosphorylated by CaMKK1 and CaMKK2 on Thr-200. Dephosphorylated by protein phosphatase 2A. Autophosphorylated on Ser-12 and Ser-13. In terms of processing, glycosylation at Ser-189 modulates the phosphorylation of CaMK4 at Thr-200 and negatively regulates its activity toward CREB1 in basal conditions and during early inomycin stimulation. As to expression, expressed in brain, thymus, CD4 T-cells, testis and epithelial ovarian cancer tissue.

It is found in the cytoplasm. The protein resides in the nucleus. It catalyses the reaction L-seryl-[protein] + ATP = O-phospho-L-seryl-[protein] + ADP + H(+). The enzyme catalyses L-threonyl-[protein] + ATP = O-phospho-L-threonyl-[protein] + ADP + H(+). With respect to regulation, activated by Ca(2+)/calmodulin. Binding of calmodulin results in conformational change that relieves intrasteric autoinhibition and allows phosphorylation of Thr-200 within the activation loop by CaMKK1 or CaMKK2. Phosphorylation of Thr-200 results in a 10-20-fold increase in total activity to generate Ca(2+)/calmodulin-independent activity. Autophosphorylation of the N-terminus Ser-12 and Ser-13 is required for full activation. Inactivated by protein phosphatase 2A (PPP2CA/PPP2CB) which dephosphorylates Thr-200, thereby terminating autonomous activity and helping to maintain the enzyme in its autoinhibited state. Functionally, calcium/calmodulin-dependent protein kinase that operates in the calcium-triggered CaMKK-CaMK4 signaling cascade and regulates, mainly by phosphorylation, the activity of several transcription activators, such as CREB1, MEF2D, JUN and RORA, which play pivotal roles in immune response, inflammation, and memory consolidation. In the thymus, regulates the CD4(+)/CD8(+) double positive thymocytes selection threshold during T-cell ontogeny. In CD4 memory T-cells, is required to link T-cell antigen receptor (TCR) signaling to the production of IL2, IFNG and IL4 (through the regulation of CREB and MEF2). Regulates the differentiation and survival phases of osteoclasts and dendritic cells (DCs). Mediates DCs survival by linking TLR4 and the regulation of temporal expression of BCL2. Phosphorylates the transcription activator CREB1 on 'Ser-133' in hippocampal neuron nuclei and contribute to memory consolidation and long term potentiation (LTP) in the hippocampus. Can activate the MAP kinases MAPK1/ERK2, MAPK8/JNK1 and MAPK14/p38 and stimulate transcription through the phosphorylation of ELK1 and ATF2. Can also phosphorylate in vitro CREBBP, PRM2, MEF2A and STMN1/OP18. This chain is Calcium/calmodulin-dependent protein kinase type IV (CAMK4), found in Homo sapiens (Human).